Consider the following 100-residue polypeptide: Large ribosomal subunit protein bL28 (100 aa).

This sequence belongs to the bacterial ribosomal protein bL28 family.

The chain is Large ribosomal subunit protein bL28 from Gluconobacter oxydans (strain 621H) (Gluconobacter suboxydans).